A 142-amino-acid polypeptide reads, in one-letter code: Large ribosomal subunit protein uL11 (142 aa).

It belongs to the universal ribosomal protein uL11 family. In terms of assembly, part of the ribosomal stalk of the 50S ribosomal subunit. Interacts with L10 and the large rRNA to form the base of the stalk. L10 forms an elongated spine to which L12 dimers bind in a sequential fashion forming a multimeric L10(L12)X complex. Post-translationally, one or more lysine residues are methylated.

Forms part of the ribosomal stalk which helps the ribosome interact with GTP-bound translation factors. The protein is Large ribosomal subunit protein uL11 of Erwinia tasmaniensis (strain DSM 17950 / CFBP 7177 / CIP 109463 / NCPPB 4357 / Et1/99).